Consider the following 235-residue polypeptide: MSIVSMKQLLEAGVHFGHQTRRWNPKMAPYIFTERNGIYIIDLQQTVEKLEQAYEFVKKLVMDGGTILFVGTKKQAQESIKEEAERCGMFYVNQRWLGGTLTNFKTIKTRIQRLKELKRMEEDGTFEVLPKKEVIRLRKEKERLQKFLGGIENMESLPSALFIVDPKKEAIAVSEARALEIPIVAIVDTNCDPELIDYPIPGNDDAIRAVKLITSKIADAVLEGKQGEQFEAAEE.

The protein belongs to the universal ribosomal protein uS2 family.

The sequence is that of Small ribosomal subunit protein uS2 from Caldanaerobacter subterraneus subsp. tengcongensis (strain DSM 15242 / JCM 11007 / NBRC 100824 / MB4) (Thermoanaerobacter tengcongensis).